The sequence spans 297 residues: Tyrosine recombinase XerD (297 aa).

One can recognise a Core-binding (CB) domain in the interval 2-86 (KKLDPIIEQF…CLRKFFRFLC (85 aa)). The Tyr recombinase domain occupies 107–291 (QLPKSLSEEQ…AKTRLKSIHK (185 aa)). Catalysis depends on residues arginine 147, lysine 171, histidine 243, arginine 246, and histidine 269. Tyrosine 278 acts as the O-(3'-phospho-DNA)-tyrosine intermediate in catalysis.

It belongs to the 'phage' integrase family. XerD subfamily. Forms a cyclic heterotetrameric complex composed of two molecules of XerC and two molecules of XerD.

It localises to the cytoplasm. Site-specific tyrosine recombinase, which acts by catalyzing the cutting and rejoining of the recombining DNA molecules. The XerC-XerD complex is essential to convert dimers of the bacterial chromosome into monomers to permit their segregation at cell division. It also contributes to the segregational stability of plasmids. The protein is Tyrosine recombinase XerD of Haemophilus ducreyi (strain 35000HP / ATCC 700724).